A 76-amino-acid polypeptide reads, in one-letter code: ATP synthase subunit 9, mitochondrial (76 aa).

The residue at position 1 (methionine 1) is an N-formylmethionine. 2 helical membrane passes run 14 to 34 (IATI…AALI) and 52 to 72 (ILGF…SFLL).

As to quaternary structure, F-type ATP synthases have 2 components, the catalytic core F(1) and the membrane-embedded component F(0), linked together by a central stalk and a peripheral stalk. The central stalk, also called rotor shaft, is often seen as part of F(1). The peripheral stalk is seen as part of F(0). F(0) contains the membrane channel next to the rotor. F-type ATP synthases form dimers but each monomer functions independently in ATP generation. The dimer consists of 18 different polypeptides: ATP1 (subunit alpha, part of F(1), 3 molecules per monomer), ATP2 (subunit beta, part of F(1), 3 molecules per monomer), ATP3 (subunit gamma, part of the central stalk), ATP4 (subunit b, part of the peripheral stalk), ATP5/OSCP (subunit 5/OSCP, part of the peripheral stalk), ATP6 (subunit a, part of the peripheral stalk), ATP7 (subunit d, part of the peripheral stalk), ATP8 (subunit 8, part of the peripheral stalk), OLI1 (subunit c, part of the rotor, 10 molecules per monomer), ATP14 (subunit h, part of the peripheral stalk), ATP15 (subunit epsilon, part of the central stalk), ATP16 (subunit delta, part of the central stalk), ATP17 (subunit f, part of the peripheral stalk), ATP18 (subunit i/j, part of the peripheral stalk). Dimer-specific subunits are ATP19 (subunit k, at interface between monomers), ATP20 (subunit g, at interface between monomers), TIM11 (subunit e, at interface between monomers). Also contains subunit L.

Its subcellular location is the mitochondrion inner membrane. In terms of biological role, mitochondrial membrane ATP synthase (F(1)F(0) ATP synthase or Complex V) produces ATP from ADP in the presence of a proton gradient across the membrane which is generated by electron transport complexes of the respiratory chain. F-type ATP synthases consist of two structural domains, F(1) - containing the extramembraneous catalytic core, and F(0) - containing the membrane proton channel, linked together by a central stalk and a peripheral stalk. During catalysis, ATP synthesis in the catalytic domain of F(1) is coupled via a rotary mechanism of the central stalk subunits to proton translocation. Part of the complex F(0) domain. A homomeric c-ring of 10 OLI1/ATP9 subunits is part of the complex rotary element. In Pichia angusta (Yeast), this protein is ATP synthase subunit 9, mitochondrial.